The chain runs to 631 residues: Probable sulfate transporter 3.3 (631 aa).

Residues 1–69 (MEVHKVVAPP…EYSFSLLKSD (69 aa)) lie on the Cytoplasmic side of the membrane. Residues 70 to 90 (VVSGLTIASLAIPQGISYAKL) traverse the membrane as a helical segment. Residues 91–92 (AN) are Extracellular-facing. A helical membrane pass occupies residues 93-113 (LPPIVGLYSSFVPPLVYAVLG). At 114-117 (SSRD) the chain is on the cytoplasmic side. The helical transmembrane segment at 118 to 138 (LAVGPVSIASLILGSMLRQQV) threads the bilayer. Topologically, residues 139-144 (SPVDDP) are extracellular. Residues 145-165 (VLFLQLAFSSTFFAGLFQASL) form a helical membrane-spanning segment. Topologically, residues 166–171 (GILRLG) are cytoplasmic. A helical membrane pass occupies residues 172–192 (FIIDFLSKATLIGFMGGAAII). At 193–223 (VSLQQLKGLLGITHFTKHMSVVPVLSSVFQH) the chain is on the extracellular side. The helical transmembrane segment at 224-244 (TNEWSWQTIVMGVCFLLFLLS) threads the bilayer. At 245–256 (TRHLSMKKPKLF) the chain is on the cytoplasmic side. Residues 257–277 (WVSAGAPLLSVIVSTLLVFVF) form a helical membrane-spanning segment. At 278 to 309 (RAERHGISVIGKLPEGLNPPSWNMLQFHGSHL) the chain is on the extracellular side. The chain crosses the membrane as a helical span at residues 310-330 (ALVAKTGLVTGIVSLTEGIAV). The Cytoplasmic segment spans residues 331–347 (GRTFAALKNYHVDGNKE). The chain crosses the membrane as a helical span at residues 348–368 (MIAIGLMNVVGSATSCYVTTG). The Extracellular segment spans residues 369-384 (AFSRSAVNNNAGAKTA). Residues 385 to 405 (VSNIVMSVTVMVTLLFLMPLF) form a helical membrane-spanning segment. Residues 406 to 410 (EYTPN) are Cytoplasmic-facing. The chain crosses the membrane as a helical span at residues 411-431 (VVLGAIIVTAVIGLIDLPAAC). Residues 432 to 441 (HIWKIDKFDF) lie on the Extracellular side of the membrane. The helical transmembrane segment at 442–462 (LVMLCAFFGVIFLSVQNGLAI) threads the bilayer. Residues 463-631 (AVGLSLFKIL…SLKGPSLSNV (169 aa)) are Cytoplasmic-facing. Residues 497–621 (HYKEAQRIPG…LTVAEAVASL (125 aa)) enclose the STAS domain.

The protein belongs to the SLC26A/SulP transporter (TC 2.A.53) family. As to expression, expressed only in leaves.

Its subcellular location is the membrane. H(+)/sulfate cotransporter that may play a role in the regulation of sulfate assimilation. The polypeptide is Probable sulfate transporter 3.3 (SULTR3;3) (Arabidopsis thaliana (Mouse-ear cress)).